The following is a 585-amino-acid chain: Arginine--tRNA ligase (585 aa).

Positions 131–141 (ANPTGPMHVGH) match the 'HIGH' region motif.

This sequence belongs to the class-I aminoacyl-tRNA synthetase family. As to quaternary structure, monomer.

The protein localises to the cytoplasm. The enzyme catalyses tRNA(Arg) + L-arginine + ATP = L-arginyl-tRNA(Arg) + AMP + diphosphate. The sequence is that of Arginine--tRNA ligase from Bartonella bacilliformis (strain ATCC 35685 / KC583 / Herrer 020/F12,63).